A 368-amino-acid chain; its full sequence is N-succinylamino acid racemase (368 aa).

Residues S135 and K161–K163 each bind 2-succinylbenzoate. K163 functions as the Proton donor in the catalytic mechanism. D189 contacts Mg(2+). N191 is a 2-succinylbenzoate binding site. Residues E214 and D239 each contribute to the Mg(2+) site. K263 acts as the Proton acceptor in catalysis. 2-succinylbenzoate is bound at residue I293.

The protein belongs to the mandelate racemase/muconate lactonizing enzyme family. MenC type 2 subfamily. In terms of assembly, homooctamer. It depends on a divalent metal cation as a cofactor.

It catalyses the reaction N-acetyl-D-methionine = N-acetyl-L-methionine. The enzyme catalyses (1R,6R)-6-hydroxy-2-succinyl-cyclohexa-2,4-diene-1-carboxylate = 2-succinylbenzoate + H2O. Inhibited by EDTA and sulfhydryl reagents such as p-chloromercuribenzoic acid. Both OSBS and NAAAR activities are inhibited competitively by salicylhydroxamate. Acts as a N-succinylamino acid racemase (NSAR) that catalyzes the racemization of N-succinyl-phenylglycine and N-succinyl-methionine. Can catalyze the racemization of a broad range of N-acylamino acids, including N-acetyl-D/L-methionine, N-propionyl-D/L-methionine, N-butyryl-D/L-methionine and N-chloroacetyl-L-valine. Also converts 2-succinyl-6-hydroxy-2,4-cyclohexadiene-1-carboxylate (SHCHC) to 2-succinylbenzoate (OSB). Catalyzes both N-succinylamino acid racemization and OSB synthesis at equivalent rates. NSAR is probably the biological function of this enzyme. The polypeptide is N-succinylamino acid racemase (Amycolatopsis sp).